A 133-amino-acid chain; its full sequence is Nickel-responsive regulator (133 aa).

Residues His-76, His-87, His-89, and Cys-95 each coordinate Ni(2+).

This sequence belongs to the transcriptional regulatory CopG/NikR family. As to quaternary structure, homotetramer. It depends on Ni(2+) as a cofactor.

Transcriptional repressor of the nikABCDE operon. Is active in the presence of excessive concentrations of intracellular nickel. The polypeptide is Nickel-responsive regulator (Escherichia coli O6:K15:H31 (strain 536 / UPEC)).